A 344-amino-acid polypeptide reads, in one-letter code: Neurotrimin (344 aa).

A signal peptide spans 1-33 (MGVCGYLFLPWKCLVVVSLRLLFLVPTGVPVRS). Ig-like C2-type domains follow at residues 39 to 126 (PKAM…PKTS), 136 to 218 (PKIV…VKVT), and 222 to 309 (PPYI…ASIM). Residues asparagine 44, asparagine 70, and asparagine 152 are each glycosylated (N-linked (GlcNAc...) asparagine). Cysteines 57 and 115 form a disulfide. 2 disulfide bridges follow: cysteine 157–cysteine 201 and cysteine 243–cysteine 295. N-linked (GlcNAc...) asparagine glycans are attached at residues asparagine 284, asparagine 292, and asparagine 305. Asparagine 321 carries the GPI-anchor amidated asparagine; alternate lipid modification. Asparagine 321 is a glycosylation site (N-linked (GlcNAc...) asparagine; alternate). A propeptide spans 322–344 (GTSRRAGCIWLLPLLVLHLLLKF) (removed in mature form).

Belongs to the immunoglobulin superfamily. IgLON family.

It localises to the cell membrane. Neural cell adhesion molecule. This Mus musculus (Mouse) protein is Neurotrimin (Ntm).